A 122-amino-acid polypeptide reads, in one-letter code: Glucagon-2 (122 aa).

Positions 1-21 (MTSLHSLAGLLLLMIIQSSWQ) are cleaved as a signal peptide. 2 consecutive propeptides follow at residues 83–86 (NGLF) and E122.

This sequence belongs to the glucagon family.

The protein resides in the secreted. Functionally, promotes hydrolysis of glycogen and lipids, and raises the blood sugar level. This is Glucagon-2 (gcg2) from Lophius americanus (American angler).